Consider the following 118-residue polypeptide: Putative pterin-4-alpha-carbinolamine dehydratase (118 aa).

Belongs to the pterin-4-alpha-carbinolamine dehydratase family.

It catalyses the reaction (4aS,6R)-4a-hydroxy-L-erythro-5,6,7,8-tetrahydrobiopterin = (6R)-L-erythro-6,7-dihydrobiopterin + H2O. The polypeptide is Putative pterin-4-alpha-carbinolamine dehydratase (Pseudomonas putida (strain GB-1)).